A 1441-amino-acid polypeptide reads, in one-letter code: Receptor-type tyrosine-protein phosphatase T (1441 aa).

Residues 1-25 (MASLAALALSLLLRLQLPPLPGARA) form the signal peptide. Residues 26–747 (QSAAGGCSFD…EKQVDNTVKM (722 aa)) lie on the Extracellular side of the membrane. Positions 30–191 (GGCSFDEHYS…VRVLAHPCRK (162 aa)) constitute an MAM domain. Asparagine 78, asparagine 98, asparagine 137, and asparagine 208 each carry an N-linked (GlcNAc...) asparagine glycan. The Ig-like C2-type domain occupies 193–284 (PHFLRLQNVE…SGVSNYAELI (92 aa)). Cysteine 213 and cysteine 267 are oxidised to a cystine. Fibronectin type-III domains are found at residues 291–384 (PIAP…TKCA), 389–483 (GPQN…TEED), 484–590 (VPGA…SAPS), and 591–726 (MPEY…ATKG). N-linked (GlcNAc...) asparagine glycosylation is found at asparagine 421, asparagine 510, asparagine 547, asparagine 601, asparagine 654, and asparagine 684. The helical transmembrane segment at 748–768 (AGVIAGLLMFIIILLGVMLTI) threads the bilayer. At 769 to 1441 (KRRRNAYSYS…EVALEYLSSF (673 aa)) the chain is on the cytoplasmic side. The tract at residues 790 to 839 (TQSGAQREMGPVASADKPTTKLSASRNDEGFSSSSQDVNGFTDGSRGELS) is disordered. A compositionally biased stretch (polar residues) spans 809–828 (TKLSASRNDEGFSSSSQDVN). 2 consecutive Tyrosine-protein phosphatase domains span residues 889-1143 (FKEE…ILEA) and 1175-1437 (IKDE…ALEY). Substrate-binding positions include aspartate 1052, 1084 to 1090 (CSAGAGR), and glutamine 1128. The active-site Phosphocysteine intermediate is cysteine 1084. Serine 1208 bears the Phosphoserine mark. The active-site Phosphocysteine intermediate is the cysteine 1378.

Belongs to the protein-tyrosine phosphatase family. Receptor class 2B subfamily. As to expression, expressed in colon, lung, heart and testis, as well as in fetal and adult brain. Not detected in muscle and peripheral blood leukocytes.

It is found in the membrane. The catalysed reaction is O-phospho-L-tyrosyl-[protein] + H2O = L-tyrosyl-[protein] + phosphate. In terms of biological role, may be involved in both signal transduction and cellular adhesion in the CNS. The polypeptide is Receptor-type tyrosine-protein phosphatase T (PTPRT) (Homo sapiens (Human)).